A 330-amino-acid chain; its full sequence is Electron transfer flavoprotein subunit alpha (330 aa).

Residue 270–298 (LYIACGISGAIQHLAGMSNSGTIVAINKN) coordinates FAD.

The protein belongs to the ETF alpha-subunit/FixB family. Heterodimer of an alpha and a beta subunit. FAD serves as cofactor.

Its function is as follows. The electron transfer flavoprotein serves as a specific electron acceptor for other dehydrogenases. It transfers the electrons to the main respiratory chain via ETF-ubiquinone oxidoreductase (ETF dehydrogenase). The polypeptide is Electron transfer flavoprotein subunit alpha (etfA) (Thermoanaerobacterium thermosaccharolyticum (strain ATCC 7956 / DSM 571 / NCIMB 9385 / NCA 3814 / NCTC 13789 / WDCM 00135 / 2032) (Clostridium thermosaccharolyticum)).